The following is a 662-amino-acid chain: Glycogen debranching enzyme (662 aa).

The active-site Nucleophile is the Asp-338. The active-site Proton donor is the Glu-373.

It belongs to the glycosyl hydrolase 13 family.

The enzyme catalyses Hydrolysis of (1-&gt;6)-alpha-D-glucosidic linkages to branches with degrees of polymerization of three or four glucose residues in limit dextrin.. It participates in glycan degradation; glycogen degradation. In terms of biological role, removes maltotriose and maltotetraose chains that are attached by 1,6-alpha-linkage to the limit dextrin main chain, generating a debranched limit dextrin. This Yersinia pseudotuberculosis serotype O:1b (strain IP 31758) protein is Glycogen debranching enzyme.